A 789-amino-acid polypeptide reads, in one-letter code: Cadherin-6 (789 aa).

The first 18 residues, 1–18 (MRTYRYFLLLFWVGQPYP), serve as a signal peptide directing secretion. Residues 19-53 (TFSNPLSKRTSGFPAKRRALELSANSRNELSRSKR) constitute a propeptide that is removed on maturation. Cadherin domains follow at residues 54-159 (SWMW…EPIF), 160-268 (TKDV…PPRF), 269-383 (PQST…PPVF), 384-486 (SKPA…DNAP), and 487-608 (EFAE…LIHP). Residues 54-615 (SWMWNQFFLL…IHPTGLSTGA (562 aa)) are Extracellular-facing. Asparagine 255 carries N-linked (GlcNAc...) asparagine glycosylation. Residues 259-288 (TDVNDNPPRFPQSTYQFKTPESSPPGTPIG) are disordered. The segment covering 269–279 (PQSTYQFKTPE) has biased composition (polar residues). Residues asparagine 399, asparagine 437, asparagine 455, and asparagine 536 are each glycosylated (N-linked (GlcNAc...) asparagine). Residues 616–636 (LVAILLCIVILLVTVVLFAAL) traverse the membrane as a helical segment. Over 637-789 (RRQRKKEPLI…YGGMDSDKDS (153 aa)) the chain is Cytoplasmic. Residues serine 785 and serine 789 each carry the phosphoserine modification.

As to expression, highly expressed in kidney and brain.

It localises to the cell membrane. Its function is as follows. Cadherins are calcium-dependent cell adhesion proteins. They preferentially interact with themselves in a homophilic manner in connecting cells; cadherins may thus contribute to the sorting of heterogeneous cell types. The chain is Cadherin-6 (Cdh6) from Rattus norvegicus (Rat).